Here is a 51-residue protein sequence, read N- to C-terminus: Light-harvesting protein B800/850/890 beta-2 chain (51 aa).

Over 1 to 17 the chain is Cytoplasmic; the sequence is ADEMRNVSDEEAKEFHA. A bacteriochlorophyll is bound by residues histidine 16 and histidine 34. Residues 18-40 traverse the membrane as a helical segment; that stretch reads MFSQAFTVYVGVAVVAHILAWAW. Topologically, residues 41 to 51 are periplasmic; sequence RPWIPGDEGFG.

Belongs to the antenna complex beta subunit family. The core complex is formed by different alpha and beta chains, binding bacteriochlorophyll molecules, and arranged most probably in tetrameric structures disposed around the reaction center. The non-pigmented gamma chains may constitute additional components.

It is found in the cell inner membrane. In terms of biological role, antenna complexes are light-harvesting systems, which transfer the excitation energy to the reaction centers. The polypeptide is Light-harvesting protein B800/850/890 beta-2 chain (Halorhodospira halophila (strain DSM 244 / SL1) (Ectothiorhodospira halophila (strain DSM 244 / SL1))).